The following is a 507-amino-acid chain: Dolichyl pyrophosphate Man9GlcNAc2 alpha-1,3-glucosyltransferase (507 aa).

Over 1–3 (MEK) the chain is Cytoplasmic. Residues 4–24 (WSLMTITVLLALTVRWTVSLG) form a helical membrane-spanning segment. Topologically, residues 25-114 (SYSGAGKPPM…SQSHKLFMRT (90 aa)) are lumenal. Asparagine 59 is a glycosylation site (N-linked (GlcNAc...) asparagine). A helical transmembrane segment spans residues 115–135 (TVFVADLLIYIPAVILYCCSL). Over 136–143 (KETSTKKK) the chain is Cytoplasmic. Residues 144–164 (VSSALCILLYPGLILIDHGHF) form a helical membrane-spanning segment. Over 165 to 168 (QYNS) the chain is Lumenal. Residues 169-189 (VSLGFALWGVLCLSYDWDLLG) form a helical membrane-spanning segment. At 190-226 (SAAFCLALNYKQMELYHSLPFFCYLLGKCFKKGLKGK) the chain is on the cytoplasmic side. A helical transmembrane segment spans residues 227-247 (GLLLLIKLAGTVVASFAVCWL). The Lumenal portion of the chain corresponds to 248 to 297 (PFCTDVEQIMQVLRRLFPIDRGLFEDKVANIWCSLSVLIKIKNVVSPQTQ). Residues 298–318 (LKLSFAVTFLSLLPTCIKLTV) form a helical membrane-spanning segment. The Cytoplasmic portion of the chain corresponds to 319 to 338 (QPSLRGFKLTLVSCALSFFL). A helical membrane pass occupies residues 339–359 (FSFQVHEKSILLVSVPVCLII). Topologically, residues 360–361 (NE) are lumenal. Residues 362-382 (VPFMATWFLLVSTFSMLPLLL) traverse the membrane as a helical segment. Residues 383 to 387 (KDGLL) lie on the Cytoplasmic side of the membrane. A helical membrane pass occupies residues 388-408 (LPYAVTTLAFLSACVASFAIF). Residues 409–441 (EKTSAKDLQLKPFSQSLRGYVSWFKLFPKIVRS) are Lumenal-facing. The helical transmembrane segment at 442–462 (LFLLSVTLMGVLSVMSAAVHP) threads the bilayer. Residues 463 to 473 (PQRFPDLFPVS) lie on the Cytoplasmic side of the membrane. Residues 474 to 494 (VSSISCLHFLFFLVYFNVIIL) form a helical membrane-spanning segment. Over 495 to 507 (WDSKNSRNQKKVS) the chain is Lumenal.

The protein belongs to the ALG6/ALG8 glucosyltransferase family.

It localises to the endoplasmic reticulum membrane. The catalysed reaction is an alpha-D-Man-(1-&gt;2)-alpha-D-Man-(1-&gt;2)-alpha-D-Man-(1-&gt;3)-[alpha-D-Man-(1-&gt;2)-alpha-D-Man-(1-&gt;3)-[alpha-D-Man-(1-&gt;2)-alpha-D-Man-(1-&gt;6)]-alpha-D-Man-(1-&gt;6)]-beta-D-Man-(1-&gt;4)-beta-D-GlcNAc-(1-&gt;4)-alpha-D-GlcNAc-diphospho-di-trans,poly-cis-dolichol + a di-trans,poly-cis-dolichyl beta-D-glucosyl phosphate = an alpha-D-Glc-(1-&gt;3)-alpha-D-Man-(1-&gt;2)-alpha-D-Man-(1-&gt;2)-alpha-D-Man-(1-&gt;3)-[alpha-D-Man-(1-&gt;2)-alpha-D-Man-(1-&gt;3)-[alpha-D-Man-(1-&gt;2)-alpha-D-Man-(1-&gt;6)]-alpha-D-Man-(1-&gt;6)]-beta-D-Man-(1-&gt;4)-beta-D-GlcNAc-(1-&gt;4)-alpha-D-GlcNAc-diphospho-di-trans,poly-cis-dolichol + a di-trans,poly-cis-dolichyl phosphate + H(+). The protein operates within protein modification; protein glycosylation. In terms of biological role, dolichyl pyrophosphate Man9GlcNAc2 alpha-1,3-glucosyltransferase that operates in the biosynthetic pathway of dolichol-linked oligosaccharides, the glycan precursors employed in protein asparagine (N)-glycosylation. The assembly of dolichol-linked oligosaccharides begins on the cytosolic side of the endoplasmic reticulum membrane and finishes in its lumen. The sequential addition of sugars to dolichol pyrophosphate produces dolichol-linked oligosaccharides containing fourteen sugars, including two GlcNAcs, nine mannoses and three glucoses. Once assembled, the oligosaccharide is transferred from the lipid to nascent proteins by oligosaccharyltransferases. In the lumen of the endoplasmic reticulum, adds the first glucose residue from dolichyl phosphate glucose (Dol-P-Glc) onto the lipid-linked oligosaccharide intermediate Man(9)GlcNAc(2)-PP-Dol to produce Glc(1)Man(9)GlcNAc(2)-PP-Dol. Glc(1)Man(9)GlcNAc(2)-PP-Dol is a substrate for ALG8, the following enzyme in the biosynthetic pathway. This is Dolichyl pyrophosphate Man9GlcNAc2 alpha-1,3-glucosyltransferase from Gallus gallus (Chicken).